The following is a 247-amino-acid chain: tRNA (guanine-N(7)-)-methyltransferase (247 aa).

S-adenosyl-L-methionine contacts are provided by residues G70, E93–I94, N128–A129, and L148. The active site involves D151. S226–E228 contacts S-adenosyl-L-methionine.

This sequence belongs to the class I-like SAM-binding methyltransferase superfamily. TrmB family.

It is found in the nucleus. The catalysed reaction is guanosine(46) in tRNA + S-adenosyl-L-methionine = N(7)-methylguanosine(46) in tRNA + S-adenosyl-L-homocysteine. Its pathway is tRNA modification; N(7)-methylguanine-tRNA biosynthesis. Its function is as follows. Catalyzes the formation of N(7)-methylguanine at position 46 (m7G46) in tRNA. In Drosophila pseudoobscura pseudoobscura (Fruit fly), this protein is tRNA (guanine-N(7)-)-methyltransferase.